We begin with the raw amino-acid sequence, 295 residues long: Inorganic pyrophosphatase 1 (295 aa).

The Nucleophile role is filled by Asp19. Asp19 and Asp21 together coordinate Mg(2+). The Proton donor role is filled by Asp21. The substrate site is built by Asp30 and Asp105. Asp190 contacts Mg(2+).

The protein belongs to the HAD-like hydrolase superfamily. As to quaternary structure, tetramer. Mg(2+) serves as cofactor. It depends on Fe(2+) as a cofactor. Requires Ni(2+) as cofactor. Co(2+) is required as a cofactor. The cofactor is Mn(2+).

It catalyses the reaction diphosphate + H2O = 2 phosphate + H(+). Catalyzes the specific cleavage of pyrophosphate. This is Inorganic pyrophosphatase 1 (PS2) from Arabidopsis thaliana (Mouse-ear cress).